The chain runs to 359 residues: Biotin synthase (359 aa).

One can recognise a Radical SAM core domain in the interval 47–276 (HHGRRVRIHV…EADLRMAGGR (230 aa)). Cysteine 65, cysteine 69, and cysteine 72 together coordinate [4Fe-4S] cluster. The [2Fe-2S] cluster site is built by cysteine 109, cysteine 141, cysteine 201, and arginine 271. The interval 320–359 (EPVIVEDGPERQTPATADDTPSGDPEAADRRRQPSAGPAG) is disordered.

This sequence belongs to the radical SAM superfamily. Biotin synthase family. Homodimer. It depends on [4Fe-4S] cluster as a cofactor. [2Fe-2S] cluster serves as cofactor.

It carries out the reaction (4R,5S)-dethiobiotin + (sulfur carrier)-SH + 2 reduced [2Fe-2S]-[ferredoxin] + 2 S-adenosyl-L-methionine = (sulfur carrier)-H + biotin + 2 5'-deoxyadenosine + 2 L-methionine + 2 oxidized [2Fe-2S]-[ferredoxin]. The protein operates within cofactor biosynthesis; biotin biosynthesis; biotin from 7,8-diaminononanoate: step 2/2. Functionally, catalyzes the conversion of dethiobiotin (DTB) to biotin by the insertion of a sulfur atom into dethiobiotin via a radical-based mechanism. In Salinibacter ruber (strain DSM 13855 / M31), this protein is Biotin synthase.